A 177-amino-acid polypeptide reads, in one-letter code: Large ribosomal subunit protein uL22 (177 aa).

A disordered region spans residues 118-177; that stretch reads VESRPSREGRRGGAGESAGGARARRAQGSKAAAAKKAPASSSKKAATTTEASEEAKGGSQ. Positions 121-130 are enriched in basic and acidic residues; the sequence is RPSREGRRGG. A compositionally biased stretch (low complexity) spans 145-167; that stretch reads GSKAAAAKKAPASSSKKAATTTE.

Belongs to the universal ribosomal protein uL22 family. As to quaternary structure, part of the 50S ribosomal subunit.

Its function is as follows. This protein binds specifically to 23S rRNA; its binding is stimulated by other ribosomal proteins, e.g. L4, L17, and L20. It is important during the early stages of 50S assembly. It makes multiple contacts with different domains of the 23S rRNA in the assembled 50S subunit and ribosome. In terms of biological role, the globular domain of the protein is located near the polypeptide exit tunnel on the outside of the subunit, while an extended beta-hairpin is found that lines the wall of the exit tunnel in the center of the 70S ribosome. The polypeptide is Large ribosomal subunit protein uL22 (Mycobacterium sp. (strain KMS)).